Reading from the N-terminus, the 262-residue chain is Flap endonuclease Xni (262 aa).

Aspartate 105 contributes to the Mg(2+) binding site. Residues serine 164–asparagine 251 enclose the 5'-3' exonuclease domain. K(+)-binding residues include leucine 172, alanine 173, proline 181, isoleucine 183, and isoleucine 186. The interaction with DNA stretch occupies residues glycine 185–serine 190.

Belongs to the Xni family. Requires Mg(2+) as cofactor. K(+) is required as a cofactor.

Has flap endonuclease activity. During DNA replication, flap endonucleases cleave the 5'-overhanging flap structure that is generated by displacement synthesis when DNA polymerase encounters the 5'-end of a downstream Okazaki fragment. The chain is Flap endonuclease Xni from Shewanella putrefaciens (strain CN-32 / ATCC BAA-453).